A 211-amino-acid chain; its full sequence is Methylthioribulose-1-phosphate dehydratase (211 aa).

Zn(2+) is bound by residues H97 and H99.

Belongs to the aldolase class II family. MtnB subfamily. Homotetramer. Zn(2+) is required as a cofactor.

It catalyses the reaction 5-(methylsulfanyl)-D-ribulose 1-phosphate = 5-methylsulfanyl-2,3-dioxopentyl phosphate + H2O. It functions in the pathway amino-acid biosynthesis; L-methionine biosynthesis via salvage pathway; L-methionine from S-methyl-5-thio-alpha-D-ribose 1-phosphate: step 2/6. Catalyzes the dehydration of methylthioribulose-1-phosphate (MTRu-1-P) into 2,3-diketo-5-methylthiopentyl-1-phosphate (DK-MTP-1-P). In Geobacillus thermodenitrificans (strain NG80-2), this protein is Methylthioribulose-1-phosphate dehydratase.